The chain runs to 124 residues: Small ribosomal subunit protein uS12c (124 aa).

Disordered stretches follow at residues 1–28 (MPTI…KGCP) and 104–124 (ASGV…QPKT). Composition is skewed to basic residues over residues 11-20 (ERHKSSKKTK) and 109-124 (DRKK…QPKT).

The protein belongs to the universal ribosomal protein uS12 family. Part of the 30S ribosomal subunit.

Its subcellular location is the plastid. The protein resides in the chloroplast. Functionally, with S4 and S5 plays an important role in translational accuracy. Located at the interface of the 30S and 50S subunits. This chain is Small ribosomal subunit protein uS12c (rps12), found in Gracilaria tenuistipitata var. liui (Red alga).